The sequence spans 260 residues: Nuclear receptor subfamily 0 group B member 2 (260 aa).

An NR LBD domain is found at serine 16 to arginine 260. Position 57 is a symmetric dimethylarginine; by PRMT5 (arginine 57).

This sequence belongs to the nuclear hormone receptor family. NR0 subfamily. As to quaternary structure, heterodimer; efficient DNA binding requires dimerization with another bHLH protein. Interacts (via N-terminus) with NEUROD1 (via N-terminus and C-terminus). Interacts with ID2. Interacts with NR1I3 and EID1. Interacts with RARA, RXRA, THRB, NR5A1, NR5A2, PPARA and PPARG. Interacts with RORG, NFIL3, NR1D1 and BHLHE41. Interacts with HNF4A; the resulting heterodimer is transcriptionally inactive. Interacts with DDX3X; this interaction disrupts the interaction between HNF4 and NR0B2/SHP that forms inactive heterodimers and enhances the formation of active HNF4 homodimers. Arginine methylation by PRMT5 enhances repression activity of metabolic genes in liver in response to bile acid signaling, by increasing interaction with cofactors. In terms of tissue distribution, detected in kidney, testis, heart and liver.

It localises to the cytoplasm. The protein resides in the nucleus. Its function is as follows. Transcriptional regulator that acts as a negative regulator of receptor-dependent signaling pathways. Specifically inhibits transactivation of the nuclear receptor with which it interacts. Inhibits transcriptional activity of NEUROD1 on E-box-containing promoter by interfering with the coactivation function of the p300/CBP-mediated transcription complex for NEUROD1. Essential component of the liver circadian clock which via its interaction with NR1D1 and RORG regulates NPAS2-mediated hepatic lipid metabolism. Regulates the circadian expression of cytochrome P450 (CYP) enzymes. Represses: NR5A2 and HNF4A to down-regulate CYP2C38, NFLI3 to up-regulate CYP2A5, BHLHE41/HNF1A axis to up-regulate CYP1A2, CYP2E1 and CYP3A11, and NR1D1 to up-regulate CYP2B10, CYP4A10 and CYP4A14. This Rattus norvegicus (Rat) protein is Nuclear receptor subfamily 0 group B member 2 (Nr0b2).